The sequence spans 347 residues: Probable dual-specificity RNA methyltransferase RlmN (347 aa).

The active-site Proton acceptor is E94. The Radical SAM core domain occupies 100–319; the sequence is YPSRTIACIS…LDTLVKNGID (220 aa). Residues C107 and C334 are joined by a disulfide bond. 3 residues coordinate [4Fe-4S] cluster: C114, C118, and C121. Residues 161–162, S193, 216–218, and N292 contribute to the S-adenosyl-L-methionine site; these read GE and SLH. Catalysis depends on C334, which acts as the S-methylcysteine intermediate.

This sequence belongs to the radical SAM superfamily. RlmN family. The cofactor is [4Fe-4S] cluster.

It localises to the cytoplasm. The enzyme catalyses adenosine(2503) in 23S rRNA + 2 reduced [2Fe-2S]-[ferredoxin] + 2 S-adenosyl-L-methionine = 2-methyladenosine(2503) in 23S rRNA + 5'-deoxyadenosine + L-methionine + 2 oxidized [2Fe-2S]-[ferredoxin] + S-adenosyl-L-homocysteine. It catalyses the reaction adenosine(37) in tRNA + 2 reduced [2Fe-2S]-[ferredoxin] + 2 S-adenosyl-L-methionine = 2-methyladenosine(37) in tRNA + 5'-deoxyadenosine + L-methionine + 2 oxidized [2Fe-2S]-[ferredoxin] + S-adenosyl-L-homocysteine. Functionally, specifically methylates position 2 of adenine 2503 in 23S rRNA and position 2 of adenine 37 in tRNAs. The polypeptide is Probable dual-specificity RNA methyltransferase RlmN (Petrotoga mobilis (strain DSM 10674 / SJ95)).